A 361-amino-acid chain; its full sequence is tRNA-specific 2-thiouridylase MnmA (361 aa).

ATP is bound by residues 8-15 (GMSGGVDS) and Met-34. The interval 94–96 (NPD) is interaction with target base in tRNA. The Nucleophile role is filled by Cys-99. The cysteines at positions 99 and 195 are disulfide-linked. Position 123 (Gly-123) interacts with ATP. The interval 145-147 (KDQ) is interaction with tRNA. The Cysteine persulfide intermediate role is filled by Cys-195. An interaction with tRNA region spans residues 307 to 308 (RY).

The protein belongs to the MnmA/TRMU family.

The protein resides in the cytoplasm. It catalyses the reaction S-sulfanyl-L-cysteinyl-[protein] + uridine(34) in tRNA + AH2 + ATP = 2-thiouridine(34) in tRNA + L-cysteinyl-[protein] + A + AMP + diphosphate + H(+). Its function is as follows. Catalyzes the 2-thiolation of uridine at the wobble position (U34) of tRNA, leading to the formation of s(2)U34. The protein is tRNA-specific 2-thiouridylase MnmA of Legionella pneumophila subsp. pneumophila (strain Philadelphia 1 / ATCC 33152 / DSM 7513).